The chain runs to 1036 residues: Chitin synthase 1 (1036 aa).

Residues Met1–Val10 show a composition bias toward pro residues. Residues Met1–Phe153 form a disordered region. N-linked (GlcNAc...) asparagine glycosylation is present at Asn38. Positions Pro86–Ser108 are enriched in low complexity. Residue Asn179 is glycosylated (N-linked (GlcNAc...) asparagine). Residues Arg189 to Arg229 are disordered. Residues Ser194–Thr203 show a composition bias toward polar residues. 7 consecutive transmembrane segments (helical) span residues Phe659–Val679, Ile699–Leu719, Thr733–Ile753, Ile776–Phe796, Ser808–Cys828, Tyr908–Tyr928, and Trp945–Val967. The interval Ala994–Leu1019 is disordered. A compositionally biased stretch (low complexity) spans Ser1001–Leu1019.

The protein belongs to the chitin synthase family. Class II subfamily.

It localises to the cell membrane. It carries out the reaction [(1-&gt;4)-N-acetyl-beta-D-glucosaminyl](n) + UDP-N-acetyl-alpha-D-glucosamine = [(1-&gt;4)-N-acetyl-beta-D-glucosaminyl](n+1) + UDP + H(+). In terms of biological role, polymerizes chitin, a structural polymer of the cell wall and septum, by transferring the sugar moiety of UDP-GlcNAc to the non-reducing end of the growing chitin polymer. CHS1 mainly responsible for normal yeast cell reproductive growth. This chain is Chitin synthase 1, found in Exophiala dermatitidis (strain ATCC 34100 / CBS 525.76 / NIH/UT8656) (Black yeast).